Here is a 131-residue protein sequence, read N- to C-terminus: Profilin-9 (131 aa).

A disulfide bond links cysteine 13 and cysteine 115. Positions 81–97 (AVTRGKKGAGGITIKKT) match the Involved in PIP2 interaction motif. A Phosphothreonine modification is found at threonine 111.

This sequence belongs to the profilin family. In terms of assembly, occurs in many kinds of cells as a complex with monomeric actin in a 1:1 ratio. In terms of processing, phosphorylated by MAP kinases.

It localises to the cytoplasm. The protein resides in the cytoskeleton. Its function is as follows. Binds to actin and affects the structure of the cytoskeleton. At high concentrations, profilin prevents the polymerization of actin, whereas it enhances it at low concentrations. The protein is Profilin-9 of Phleum pratense (Common timothy).